We begin with the raw amino-acid sequence, 549 residues long: uncharacterized protein (549 aa).

This is an uncharacterized protein from Acanthamoeba polyphaga (Amoeba).